A 433-amino-acid chain; its full sequence is C2H2 type master regulator of conidiophore development brlA (433 aa).

Disordered regions lie at residues 24–49 (SDCPSMTSSFSPLDSPTPTPTSLYSQ), 240–269 (KSHTPSTPHRSVSMGTPSGSDTPVSRISGH), and 286–306 (MMQRHRQPSRKPSKKQLLRSN). The span at 30 to 49 (TSSFSPLDSPTPTPTSLYSQ) shows a compositional bias: low complexity. The span at 240–264 (KSHTPSTPHRSVSMGTPSGSDTPVS) shows a compositional bias: polar residues. A compositionally biased stretch (basic residues) spans 288-302 (QRHRQPSRKPSKKQL). 2 C2H2-type zinc fingers span residues 321–345 (FKCKEPGCKGRFKRQEHLKRHMKSH) and 351–376 (HVCWVPGCHRAFSRSDNLNAHYTKTH). The interval 391-423 (ETSQDFDPDFRGQLTPDGRPIYGSKLEDSMPDC) is disordered.

The protein localises to the nucleus. In terms of biological role, brlA, abaA and wetA are pivotal regulators of conidiophore development and conidium maturation. They act individually and together to regulate their own expression and that of numerous other sporulation-specific genes. Binds promoters of target genes at brlA response elements (BREs) containing the conserved sequence 5'-(C/A)(A/G)AGGG(G/A)-3'. Regulates genes involved in conidiogenesis. The polypeptide is C2H2 type master regulator of conidiophore development brlA (Penicillium digitatum (strain PHI26 / CECT 20796) (Green mold)).